Consider the following 483-residue polypeptide: Sphingomyelin synthase-related 1 (483 aa).

The next 3 membrane-spanning stretches (helical) occupy residues 182–202 (LIAF…MVLV), 230–250 (FDMC…VLFF), and 261–281 (MFSL…ITSL). Residue H330 is part of the active site. A helical membrane pass occupies residues 349–369 (WTGLHTFTWVLNCFAIFLILA). Residues H373 and D377 contribute to the active site. The chain crosses the membrane as a helical span at residues 376–396 (IDVFIAFYISSRMFLYYHAYA). The Cytoplasmic segment spans residues 397-483 (YNHAGITATD…NSKNHTKKHN (87 aa)). Over residues 450–461 (EPKITPKSDSSR) the composition is skewed to basic and acidic residues. Positions 450–483 (EPKITPKSDSSRKRSSVVAAKQNGNSKNHTKKHN) are disordered.

This sequence belongs to the sphingomyelin synthase family.

The protein resides in the membrane. The protein is Sphingomyelin synthase-related 1 of Caenorhabditis elegans.